The primary structure comprises 407 residues: Peptidase T (407 aa).

H81 lines the Zn(2+) pocket. D83 is an active-site residue. D142 lines the Zn(2+) pocket. E176 (proton acceptor) is an active-site residue. Zn(2+) contacts are provided by E177, D199, and H381.

This sequence belongs to the peptidase M20B family. Zn(2+) serves as cofactor.

Its subcellular location is the cytoplasm. It catalyses the reaction Release of the N-terminal residue from a tripeptide.. In terms of biological role, cleaves the N-terminal amino acid of tripeptides. The sequence is that of Peptidase T from Streptococcus pneumoniae (strain JJA).